A 91-amino-acid polypeptide reads, in one-letter code: Large ribosomal subunit protein eL34 (91 aa).

The protein belongs to the eukaryotic ribosomal protein eL34 family.

This Thermofilum pendens (strain DSM 2475 / Hrk 5) protein is Large ribosomal subunit protein eL34.